Here is a 144-residue protein sequence, read N- to C-terminus: Large ribosomal subunit protein uL13 (144 aa).

This sequence belongs to the universal ribosomal protein uL13 family. In terms of assembly, part of the 50S ribosomal subunit.

This protein is one of the early assembly proteins of the 50S ribosomal subunit, although it is not seen to bind rRNA by itself. It is important during the early stages of 50S assembly. This is Large ribosomal subunit protein uL13 from Clostridium kluyveri (strain NBRC 12016).